The sequence spans 695 residues: uncharacterized protein (695 aa).

The residue at position 113 (serine 113) is a Phosphoserine. The next 12 membrane-spanning stretches (helical) occupy residues 237–257 (FPLIFTFLLEQIFPMVCSLTV), 265–285 (LAAVSLASMTSNITLAIFEGI), 313–333 (IAFSLVIYIPFAVMWWYSEPL), 344–364 (INLTSRFLRVLILGAPAYIFF), 380–400 (GIYVLTICAPLNVLVSYTLVW), 408–428 (FIGAAIAVVLNFWLMFFLLLF), 457–477 (AFSGIIMLEAEELSYELLTLF), 488–508 (AQSAVSTMAALLYMIPFAIGI), 531–551 (QVGLSFSFIAGFINCCILVFG), 565–585 (VIKLIAQVLPLVGIVQNFDSL), 604–624 (IVNLMAYYLFGIPLALILSWF), and 633–653 (WIGIGSAMLLIGLVEAYYVLF). Positions 673-688 (EVDSDEYLTDSDDPDE) are enriched in acidic residues. The disordered stretch occupies residues 673–695 (EVDSDEYLTDSDDPDENTALLGA).

It belongs to the multi antimicrobial extrusion (MATE) (TC 2.A.66.1) family.

The protein resides in the membrane. This is an uncharacterized protein from Saccharomyces cerevisiae (strain ATCC 204508 / S288c) (Baker's yeast).